A 664-amino-acid chain; its full sequence is Cytoskeleton-associated protein 2 (664 aa).

Residues 1 to 38 form a disordered region; sequence MAESRKRFLGRAARNPLPVTRDLQLPPTRRDQPAFREQ. Residues 28–38 show a composition bias toward basic and acidic residues; sequence TRRDQPAFREQ. The association with alpha- and beta-tubulin stretch occupies residues 160-319; that stretch reads PKQDSNVSKK…ASKDAARTDS (160 aa). Ser186 is modified (phosphoserine). Disordered regions lie at residues 254-273, 283-328, 366-393, and 512-545; these read IRSL…SRPL, LDKE…MVKP, GKGK…NPVG, and AHAT…KVEV. Residues 300 to 309 are compositionally biased toward polar residues; that stretch reads GSSQAPSRSI. Residues 366-375 are compositionally biased toward basic residues; sequence GKGKGLKRPP. Basic and acidic residues predominate over residues 533–545; that stretch reads PGEENEHHGKVEV. Phosphothreonine is present on Thr561. Ser577 bears the Phosphoserine mark. A Phosphothreonine modification is found at Thr579. Ser584 carries the post-translational modification Phosphoserine.

It belongs to the CKAP2 family. As to quaternary structure, associates with alpha- and beta-tubulins.

The protein localises to the cytoplasm. It is found in the cytoskeleton. The protein resides in the spindle. Its subcellular location is the spindle pole. Possesses microtubule stabilizing properties. Involved in regulating aneuploidy, cell cycling, and cell death in a p53-dependent manner. The polypeptide is Cytoskeleton-associated protein 2 (Mus musculus (Mouse)).